A 121-amino-acid polypeptide reads, in one-letter code: Small ribosomal subunit protein uS13 (121 aa).

Residues 91-121 (HKRGLPVRGQRTRTNARTRKGPRRAAASLKK) are disordered.

Belongs to the universal ribosomal protein uS13 family. Part of the 30S ribosomal subunit. Forms a loose heterodimer with protein S19. Forms two bridges to the 50S subunit in the 70S ribosome.

Located at the top of the head of the 30S subunit, it contacts several helices of the 16S rRNA. In the 70S ribosome it contacts the 23S rRNA (bridge B1a) and protein L5 of the 50S subunit (bridge B1b), connecting the 2 subunits; these bridges are implicated in subunit movement. Contacts the tRNAs in the A and P-sites. This chain is Small ribosomal subunit protein uS13, found in Bordetella avium (strain 197N).